The primary structure comprises 526 residues: MEEFPGYLEXDRSRQQPFXYPLLFQEYIYALAHNHNRGLKGSLFYGPSEVXGYDSKSSLALVKRLIIRIYQQNDFLPVVNDSNKXRFVSHHRGNFFYSHFYSXMISEGYAILVEIPFSLRLVSYFEKKEIPKSHNLRSIHSIFPFXXXXXXXXNYVSDILIPHPIHMEILVQILQCRIQDVPFLHFLPFFLHKYHNWNWNSFLITPKKSIYVFSKENKRLFRFLYNSYVSECEFLLVFLRKQSSYLRLTSFGLFLERRHFYVKIKRLQMQHLILIVVCRDYFQGTLWSFKDPFMHYVRCQGKAVLASKGTHLLMKKWKYNFVNLWQYYFNFWYQSYRIHINQLSNYSFYFLGYLSSLLKNSSMVRNQMLENSFLVDTVTNKFETLVPVIFLIGSLSKAQFCTVLGHPISKPIWADLPDSEIIERFGRMCRNLSHYHSGSSKKQGLYRIKYILRLSCARTLARKHKSTVRVFLRRLGSGLLEEFFTEEEQVLSLILPKTIPFTFYGSHKERIWYLDIIRINDLVNHS.

It belongs to the intron maturase 2 family. MatK subfamily.

It is found in the plastid. It localises to the chloroplast. In terms of biological role, usually encoded in the trnK tRNA gene intron. Probably assists in splicing its own and other chloroplast group II introns. The sequence is that of Maturase K from Iris pseudacorus (Yellow flag).